A 336-amino-acid polypeptide reads, in one-letter code: Ketol-acid reductoisomerase (NADP(+)) (336 aa).

A KARI N-terminal Rossmann domain is found at 1–182 (MAVIYYDKDA…GVTRAGVIET (182 aa)). Residues 25 to 28 (FGSQ), Arg48, Ser51, Ser53, and 83 to 86 (DEHQ) contribute to the NADP(+) site. Residue His108 is part of the active site. Residue Gly134 participates in NADP(+) binding. Residues 183–328 (TFKEETETDL…KELRKMMPWL (146 aa)) form the KARI C-terminal knotted domain. 4 residues coordinate Mg(2+): Asp191, Glu195, Glu227, and Glu231. Residue Ser252 participates in substrate binding.

The protein belongs to the ketol-acid reductoisomerase family. Mg(2+) serves as cofactor.

The catalysed reaction is (2R)-2,3-dihydroxy-3-methylbutanoate + NADP(+) = (2S)-2-acetolactate + NADPH + H(+). It catalyses the reaction (2R,3R)-2,3-dihydroxy-3-methylpentanoate + NADP(+) = (S)-2-ethyl-2-hydroxy-3-oxobutanoate + NADPH + H(+). It functions in the pathway amino-acid biosynthesis; L-isoleucine biosynthesis; L-isoleucine from 2-oxobutanoate: step 2/4. Its pathway is amino-acid biosynthesis; L-valine biosynthesis; L-valine from pyruvate: step 2/4. Its function is as follows. Involved in the biosynthesis of branched-chain amino acids (BCAA). Catalyzes an alkyl-migration followed by a ketol-acid reduction of (S)-2-acetolactate (S2AL) to yield (R)-2,3-dihydroxy-isovalerate. In the isomerase reaction, S2AL is rearranged via a Mg-dependent methyl migration to produce 3-hydroxy-3-methyl-2-ketobutyrate (HMKB). In the reductase reaction, this 2-ketoacid undergoes a metal-dependent reduction by NADPH to yield (R)-2,3-dihydroxy-isovalerate. The polypeptide is Ketol-acid reductoisomerase (NADP(+)) (Thermotoga neapolitana (strain ATCC 49049 / DSM 4359 / NBRC 107923 / NS-E)).